The sequence spans 101 residues: MAKESMKNRELKRQLTVAKYAKKRAELKAIIANPNSSAEERWNAQVALQKQPRDASASRLRNRCRLTGRPHGFYRKFGLSRNKLREAAMRGDVPGLVKASW.

It belongs to the universal ribosomal protein uS14 family. In terms of assembly, part of the 30S ribosomal subunit. Contacts proteins S3 and S10.

Functionally, binds 16S rRNA, required for the assembly of 30S particles and may also be responsible for determining the conformation of the 16S rRNA at the A site. The sequence is that of Small ribosomal subunit protein uS14 from Pseudomonas aeruginosa (strain LESB58).